Here is a 505-residue protein sequence, read N- to C-terminus: Putative heat shock protein HSP 90-beta 4 (505 aa).

Asn22, Lys83, and Phe109 together coordinate ATP. Residues 197–248 (EKEISDDEEEKGEKEEEDKDDKEKPKTEDVGSDEEDDTDKNNKKKTKKIKEK) are disordered. Over residues 200 to 216 (ISDDEEEKGEKEEEDKD) the composition is skewed to acidic residues.

It belongs to the heat shock protein 90 family. Homodimer.

Its subcellular location is the cytoplasm. Its function is as follows. Putative molecular chaperone that may promote the maturation, structural maintenance and proper regulation of specific target proteins. This is Putative heat shock protein HSP 90-beta 4 (HSP90AB4P) from Homo sapiens (Human).